Reading from the N-terminus, the 181-residue chain is Oligoribonuclease (181 aa).

Residues 8–171 (LIWIDLEMTG…DDIRESVAEL (164 aa)) form the Exonuclease domain. Residue Y129 is part of the active site.

It belongs to the oligoribonuclease family.

The protein resides in the cytoplasm. In terms of biological role, 3'-to-5' exoribonuclease specific for small oligoribonucleotides. The polypeptide is Oligoribonuclease (Klebsiella pneumoniae subsp. pneumoniae (strain ATCC 700721 / MGH 78578)).